Here is a 126-residue protein sequence, read N- to C-terminus: Fluoride-specific ion channel FluC (126 aa).

The next 4 membrane-spanning stretches (helical) occupy residues 1-21 (MIVI…FGLD), 40-60 (LATL…GGFA), 72-92 (AISI…VATV), and 104-124 (MVNI…GLSL). Positions 79 and 82 each coordinate Na(+).

It belongs to the fluoride channel Fluc/FEX (TC 1.A.43) family.

The protein localises to the cell membrane. The enzyme catalyses fluoride(in) = fluoride(out). Its activity is regulated as follows. Na(+) is not transported, but it plays an essential structural role and its presence is essential for fluoride channel function. Functionally, fluoride-specific ion channel. Important for reducing fluoride concentration in the cell, thus reducing its toxicity. This is Fluoride-specific ion channel FluC from Renibacterium salmoninarum (strain ATCC 33209 / DSM 20767 / JCM 11484 / NBRC 15589 / NCIMB 2235).